A 122-amino-acid polypeptide reads, in one-letter code: MARIAGVNIPTAKRVPIALTYITGIGNTSAKAICEAVGIDATRRVNELSDAEILAIREHIDANYSVEGDLRREVQMNIKRLMDLGCYRGLRHRRNLPVRGQRTHTNARTRKGPAKAIAGKKK.

A disordered region spans residues 98 to 122 (VRGQRTHTNARTRKGPAKAIAGKKK).

The protein belongs to the universal ribosomal protein uS13 family. As to quaternary structure, part of the 30S ribosomal subunit. Forms a loose heterodimer with protein S19. Forms two bridges to the 50S subunit in the 70S ribosome.

In terms of biological role, located at the top of the head of the 30S subunit, it contacts several helices of the 16S rRNA. In the 70S ribosome it contacts the 23S rRNA (bridge B1a) and protein L5 of the 50S subunit (bridge B1b), connecting the 2 subunits; these bridges are implicated in subunit movement. Contacts the tRNAs in the A and P-sites. This chain is Small ribosomal subunit protein uS13, found in Ruegeria pomeroyi (strain ATCC 700808 / DSM 15171 / DSS-3) (Silicibacter pomeroyi).